The chain runs to 287 residues: uncharacterized protein (287 aa).

Positions 1–17 (MRWQGRRESDNVEDRRN) are enriched in basic and acidic residues. A disordered region spans residues 1-29 (MRWQGRRESDNVEDRRNSSGGPSMGGPGF). A helical transmembrane segment spans residues 38-60 (LILLIVVLVAGYYGVDLTGLMTG).

It localises to the membrane. This is an uncharacterized protein from Escherichia coli O6:H1 (strain CFT073 / ATCC 700928 / UPEC).